Consider the following 153-residue polypeptide: ORM1-like protein 3 (153 aa).

Residues 1–17 (MNVGTAHSEVNPNTRVM) are important for ceramide level-sensing. The Cytoplasmic segment spans residues 1–21 (MNVGTAHSEVNPNTRVMNSRG). Transmembrane regions (helical) follow at residues 22 to 42 (IWLS…SIPF) and 43 to 63 (VSVP…MYIF). The Cytoplasmic portion of the chain corresponds to 64–94 (LHTVKGTPFETPDQGKARLLTHWEQMDYGVQ). Residues 95–117 (FTASRKFLTITPIVLYFLTSFYT) form a helical membrane-spanning segment. Over 118 to 121 (KYDQ) the chain is Extracellular. Residues 122–142 (IHFILNTVSLMSVLIPKLPQL) form a helical membrane-spanning segment. A Hydroxyproline modification is found at Pro137. The Cytoplasmic segment spans residues 143 to 153 (HGVRIFGINKY).

The protein belongs to the ORM family. Ceramide-sensitive subunit of the serine palmitoyltransferase (SPT) complex, which is also composed of SPTLC1, SPTLC2/3 and SPTSSA/B. When hydroxylated at Pro-137, ubiquitinated via 'Lys-48'-linkage, leading to proteasomal degradation. In endothelial cells, ORMDL3 proteasomal degradation is controlled by the sphingosine 1-phosphate receptor signaling pathway.

The protein resides in the endoplasmic reticulum membrane. In terms of biological role, plays an essential role in the homeostatic regulation of sphingolipid de novo biosynthesis by modulating the activity of the serine palmitoyltransferase (SPT) in response to ceramide levels. When complexed to SPT, the binding of ceramides to its N-terminus stabilizes a conformation that block SPT substrate entry, hence preventing SPT catalytic activity. Through this mechanism, maintains ceramide levels at sufficient concentrations for the production of complex sphingolipids, but which prevents the accumulation of ceramides to levels that trigger apoptosis. This chain is ORM1-like protein 3 (ORMDL3), found in Bos taurus (Bovine).